Here is a 235-residue protein sequence, read N- to C-terminus: Octanoyltransferase (235 aa).

One can recognise a BPL/LPL catalytic domain in the interval 52-229 (KNRQASMIFC…SICSALEYIN (178 aa)). Residues 89–96 (RGGKITWH), 159–161 (AIG), and 172–174 (GFA) contribute to the substrate site. C190 serves as the catalytic Acyl-thioester intermediate.

This sequence belongs to the LipB family.

It is found in the cytoplasm. The enzyme catalyses octanoyl-[ACP] + L-lysyl-[protein] = N(6)-octanoyl-L-lysyl-[protein] + holo-[ACP] + H(+). Its pathway is protein modification; protein lipoylation via endogenous pathway; protein N(6)-(lipoyl)lysine from octanoyl-[acyl-carrier-protein]: step 1/2. Catalyzes the transfer of endogenously produced octanoic acid from octanoyl-acyl-carrier-protein onto the lipoyl domains of lipoate-dependent enzymes. Lipoyl-ACP can also act as a substrate although octanoyl-ACP is likely to be the physiological substrate. This Tropheryma whipplei (strain Twist) (Whipple's bacillus) protein is Octanoyltransferase.